A 245-amino-acid polypeptide reads, in one-letter code: uncharacterized protein (245 aa).

A compositionally biased stretch (basic and acidic residues) spans 162–174; sequence KEQSDVTTSERTR. A disordered region spans residues 162 to 183; sequence KEQSDVTTSERTRSPPGSSKTT.

This is an uncharacterized protein from Homo sapiens (Human).